A 336-amino-acid chain; its full sequence is Phosphate acyltransferase (336 aa).

It belongs to the PlsX family. In terms of assembly, homodimer. Probably interacts with PlsY.

The protein resides in the cytoplasm. The catalysed reaction is a fatty acyl-[ACP] + phosphate = an acyl phosphate + holo-[ACP]. Its pathway is lipid metabolism; phospholipid metabolism. Its function is as follows. Catalyzes the reversible formation of acyl-phosphate (acyl-PO(4)) from acyl-[acyl-carrier-protein] (acyl-ACP). This enzyme utilizes acyl-ACP as fatty acyl donor, but not acyl-CoA. The sequence is that of Phosphate acyltransferase from Pseudomonas putida (strain ATCC 700007 / DSM 6899 / JCM 31910 / BCRC 17059 / LMG 24140 / F1).